Here is a 308-residue protein sequence, read N- to C-terminus: Sulfate adenylyltransferase subunit 2 (308 aa).

This sequence belongs to the PAPS reductase family. CysD subfamily. As to quaternary structure, heterodimer composed of CysD, the smaller subunit, and CysN.

The catalysed reaction is sulfate + ATP + H(+) = adenosine 5'-phosphosulfate + diphosphate. The protein operates within sulfur metabolism; hydrogen sulfide biosynthesis; sulfite from sulfate: step 1/3. Functionally, with CysN forms the ATP sulfurylase (ATPS) that catalyzes the adenylation of sulfate producing adenosine 5'-phosphosulfate (APS) and diphosphate, the first enzymatic step in sulfur assimilation pathway. APS synthesis involves the formation of a high-energy phosphoric-sulfuric acid anhydride bond driven by GTP hydrolysis by CysN coupled to ATP hydrolysis by CysD. In Chromobacterium violaceum (strain ATCC 12472 / DSM 30191 / JCM 1249 / CCUG 213 / NBRC 12614 / NCIMB 9131 / NCTC 9757 / MK), this protein is Sulfate adenylyltransferase subunit 2.